Reading from the N-terminus, the 263-residue chain is 5'-nucleotidase SurE (263 aa).

4 residues coordinate a divalent metal cation: aspartate 8, aspartate 9, serine 40, and asparagine 93.

The protein belongs to the SurE nucleotidase family. It depends on a divalent metal cation as a cofactor.

Its subcellular location is the cytoplasm. It catalyses the reaction a ribonucleoside 5'-phosphate + H2O = a ribonucleoside + phosphate. Its function is as follows. Nucleotidase that shows phosphatase activity on nucleoside 5'-monophosphates. In Beijerinckia indica subsp. indica (strain ATCC 9039 / DSM 1715 / NCIMB 8712), this protein is 5'-nucleotidase SurE.